The chain runs to 155 residues: Ribosome maturation factor RimP (155 aa).

The protein belongs to the RimP family.

It is found in the cytoplasm. Its function is as follows. Required for maturation of 30S ribosomal subunits. In Staphylococcus haemolyticus (strain JCSC1435), this protein is Ribosome maturation factor RimP.